The following is a 304-amino-acid chain: Probable 5-dehydro-4-deoxyglucarate dehydratase (304 aa).

The protein belongs to the DapA family.

The catalysed reaction is 5-dehydro-4-deoxy-D-glucarate + H(+) = 2,5-dioxopentanoate + CO2 + H2O. It functions in the pathway carbohydrate acid metabolism; D-glucarate degradation; 2,5-dioxopentanoate from D-glucarate: step 2/2. This is Probable 5-dehydro-4-deoxyglucarate dehydratase from Methylobacterium radiotolerans (strain ATCC 27329 / DSM 1819 / JCM 2831 / NBRC 15690 / NCIMB 10815 / 0-1).